The chain runs to 373 residues: Lipoyl synthase, mitochondrial (373 aa).

A mitochondrion-targeting transit peptide spans 1–26 (MALRCWDAARSLGSRIFGRYACSVRA). [4Fe-4S] cluster-binding residues include C105, C110, C116, C136, C140, C143, and S351. The 220-residue stretch at 121–340 (EYATATATIM…EEVGNELGFH (220 aa)) folds into the Radical SAM core domain.

This sequence belongs to the radical SAM superfamily. Lipoyl synthase family. It depends on [4Fe-4S] cluster as a cofactor.

It is found in the mitochondrion. It carries out the reaction [[Fe-S] cluster scaffold protein carrying a second [4Fe-4S](2+) cluster] + N(6)-octanoyl-L-lysyl-[protein] + 2 oxidized [2Fe-2S]-[ferredoxin] + 2 S-adenosyl-L-methionine + 4 H(+) = [[Fe-S] cluster scaffold protein] + N(6)-[(R)-dihydrolipoyl]-L-lysyl-[protein] + 4 Fe(3+) + 2 hydrogen sulfide + 2 5'-deoxyadenosine + 2 L-methionine + 2 reduced [2Fe-2S]-[ferredoxin]. It functions in the pathway protein modification; protein lipoylation via endogenous pathway; protein N(6)-(lipoyl)lysine from octanoyl-[acyl-carrier-protein]: step 2/2. Its function is as follows. Catalyzes the radical-mediated insertion of two sulfur atoms into the C-6 and C-8 positions of the octanoyl moiety bound to the lipoyl domains of lipoate-dependent enzymes, thereby converting the octanoylated domains into lipoylated derivatives. The sequence is that of Lipoyl synthase, mitochondrial (Lias) from Rattus norvegicus (Rat).